The chain runs to 330 residues: Phosphate acyltransferase (330 aa).

It belongs to the PlsX family. In terms of assembly, homodimer. Probably interacts with PlsY.

The protein localises to the cytoplasm. The catalysed reaction is a fatty acyl-[ACP] + phosphate = an acyl phosphate + holo-[ACP]. Its pathway is lipid metabolism; phospholipid metabolism. In terms of biological role, catalyzes the reversible formation of acyl-phosphate (acyl-PO(4)) from acyl-[acyl-carrier-protein] (acyl-ACP). This enzyme utilizes acyl-ACP as fatty acyl donor, but not acyl-CoA. The polypeptide is Phosphate acyltransferase (Bacillus licheniformis (strain ATCC 14580 / DSM 13 / JCM 2505 / CCUG 7422 / NBRC 12200 / NCIMB 9375 / NCTC 10341 / NRRL NRS-1264 / Gibson 46)).